The primary structure comprises 185 residues: Elongation factor P (185 aa).

It belongs to the elongation factor P family.

It is found in the cytoplasm. It functions in the pathway protein biosynthesis; polypeptide chain elongation. Involved in peptide bond synthesis. Stimulates efficient translation and peptide-bond synthesis on native or reconstituted 70S ribosomes in vitro. Probably functions indirectly by altering the affinity of the ribosome for aminoacyl-tRNA, thus increasing their reactivity as acceptors for peptidyl transferase. This is Elongation factor P from Acaryochloris marina (strain MBIC 11017).